The following is a 64-amino-acid chain: H/ACA ribonucleoprotein complex subunit 3-like protein (64 aa).

It belongs to the NOP10 family. Component of the small nucleolar ribonucleoprotein particles containing H/ACA-type snoRNAs (H/ACA snoRNPs).

The protein resides in the nucleus. The protein localises to the nucleolus. Functionally, required for ribosome biogenesis. Part of a complex which catalyzes pseudouridylation of rRNA. This involves the isomerization of uridine such that the ribose is subsequently attached to C5, instead of the normal N1. Pseudouridine ('psi') residues may serve to stabilize the conformation of rRNAs. The sequence is that of H/ACA ribonucleoprotein complex subunit 3-like protein from Arabidopsis thaliana (Mouse-ear cress).